The following is a 430-amino-acid chain: Asparagine--tRNA ligase (430 aa).

This sequence belongs to the class-II aminoacyl-tRNA synthetase family. In terms of assembly, homodimer.

The protein localises to the cytoplasm. It catalyses the reaction tRNA(Asn) + L-asparagine + ATP = L-asparaginyl-tRNA(Asn) + AMP + diphosphate + H(+). The chain is Asparagine--tRNA ligase from Staphylococcus aureus (strain bovine RF122 / ET3-1).